A 571-amino-acid polypeptide reads, in one-letter code: Septation ring formation regulator EzrA (571 aa).

At 1 to 3 (MYY) the chain is on the extracellular side. The helical transmembrane segment at 4–22 (MLIGFIIVVIAVIGAGYIL) threads the bilayer. The Cytoplasmic segment spans residues 23-571 (KRKHYQRINE…ASKVSVDDIE (549 aa)). 5 coiled-coil regions span residues 102–147 (ATNA…TKEK), 248–298 (LAQM…DTLE), 326–374 (DALA…ASGE), 400–437 (KFAE…ERER), and 478–529 (RIAE…ENHF).

Belongs to the EzrA family.

The protein resides in the cell membrane. In terms of biological role, negative regulator of FtsZ ring formation; modulates the frequency and position of FtsZ ring formation. Inhibits FtsZ ring formation at polar sites. Interacts either with FtsZ or with one of its binding partners to promote depolymerization. The polypeptide is Septation ring formation regulator EzrA (Listeria monocytogenes serotype 4a (strain HCC23)).